A 309-amino-acid chain; its full sequence is MLALRGRRGKRVRYPADGVAEADEAFVLPRPLRRGVRFLISLGAGRIRFPNHTGTVAAAAFMVATGLYGMSLGGHTQSFAQVSTTAAGFAIEDVRVSGNAQTSEIDILQQLGLDGTTSLVALDIEEARRLIGELPWVETVTVRKVYPGTIEVVLKEREAFGIWQHGSDLSLIERSGSVIAPLRDNKFASLPLFVGRDAETAAAAFYDEFSRWPEFRSRVKAFVRVAGRRWDLRLNNGVVVKLPEKDVARAMSVLAGMQDTHQLLERDIAAVDLRLEDRTTVQLTPEAVKRREVALKAREKMLKAQEKRI.

At 1–52 (MLALRGRRGKRVRYPADGVAEADEAFVLPRPLRRGVRFLISLGAGRIRFPNH) the chain is on the cytoplasmic side. Residues 53 to 74 (TGTVAAAAFMVATGLYGMSLGG) form a helical membrane-spanning segment. Over 75–309 (HTQSFAQVST…KMLKAQEKRI (235 aa)) the chain is Periplasmic. Residues 89 to 157 (FAIEDVRVSG…GTIEVVLKER (69 aa)) enclose the POTRA domain.

This sequence belongs to the FtsQ/DivIB family. FtsQ subfamily.

The protein localises to the cell inner membrane. Its function is as follows. Essential cell division protein. The sequence is that of Cell division protein FtsQ from Rhizobium meliloti (strain 1021) (Ensifer meliloti).